A 56-amino-acid polypeptide reads, in one-letter code: Ovomucoid (56 aa).

A Kazal-like domain is found at 6-56; it reads VDCSDHPKPACLQEQKPLCGSDNKTYDNKCSFCNAVVDSNGTLTLSHFGKC. Cystine bridges form between Cys-8–Cys-38, Cys-16–Cys-35, and Cys-24–Cys-56. Asn-45 is a glycosylation site (N-linked (GlcNAc...) asparagine).

It localises to the secreted. This chain is Ovomucoid, found in Pipile pipile (Trinidad piping guan).